We begin with the raw amino-acid sequence, 282 residues long: DegV domain-containing protein spr1415 (282 aa).

The DegV domain occupies 3–280 (LAVFTDSSAY…AGSIALGYIP (278 aa)). Hexadecanoate-binding residues include Thr-61 and Ser-94.

May bind long-chain fatty acids, such as palmitate, and may play a role in lipid transport or fatty acid metabolism. The protein is DegV domain-containing protein spr1415 of Streptococcus pneumoniae (strain ATCC BAA-255 / R6).